We begin with the raw amino-acid sequence, 125 residues long: CLAVATA3/ESR (CLE)-related protein ESR3 (125 aa).

The N-terminal stretch at 1–26 (MASRMGMVAIMSLFVYAIVVPTSVNA) is a signal peptide. The segment at 45-125 (QQQGGFIGHR…IGPPPLPDRY (81 aa)) is disordered. Residues Pro-75 and Pro-78 each carry the hydroxyproline modification. An O-linked (Ara...) hydroxyproline glycan is attached at Pro-78.

It belongs to the CLV3/ESR signal peptide family. The O-glycosylation (arabinosylation) of the hydroxyproline Pro-78 enhances binding affinity of the ESR3p peptide for its receptor. As to expression, seed endosperm.

It localises to the secreted. It is found in the extracellular space. Its function is as follows. Extracellular signal peptide that regulates cell fate. This chain is CLAVATA3/ESR (CLE)-related protein ESR3, found in Zea mays (Maize).